The sequence spans 147 residues: Flagellar assembly factor FliW (147 aa).

Belongs to the FliW family. In terms of assembly, interacts with translational regulator CsrA and flagellin(s).

The protein resides in the cytoplasm. In terms of biological role, acts as an anti-CsrA protein, binds CsrA and prevents it from repressing translation of its target genes, one of which is flagellin. Binds to flagellin and participates in the assembly of the flagellum. The polypeptide is Flagellar assembly factor FliW (Chromobacterium violaceum (strain ATCC 12472 / DSM 30191 / JCM 1249 / CCUG 213 / NBRC 12614 / NCIMB 9131 / NCTC 9757 / MK)).